The sequence spans 462 residues: A-type ATP synthase subunit B (462 aa).

This sequence belongs to the ATPase alpha/beta chains family. As to quaternary structure, has multiple subunits with at least A(3), B(3), C, D, E, F, H, I and proteolipid K(x).

The protein localises to the cell membrane. Component of the A-type ATP synthase that produces ATP from ADP in the presence of a proton gradient across the membrane. The B chain is a regulatory subunit. The polypeptide is A-type ATP synthase subunit B (Methanococcus maripaludis (strain C5 / ATCC BAA-1333)).